Reading from the N-terminus, the 401-residue chain is Nodulation protein E (401 aa).

Positions 2 to 400 constitute a Ketosynthase family 3 (KS3) domain; sequence DRRVVITGMG…GTNAVLAFKQ (399 aa). Residues C161, H293, and H330 each act as for beta-ketoacyl synthase activity in the active site. The helical transmembrane segment at 328–347 threads the bilayer; the sequence is HAHCIGAASALEMIACVMAI.

Belongs to the thiolase-like superfamily. Beta-ketoacyl-ACP synthases family.

The protein localises to the cell inner membrane. In terms of biological role, proposed to synthesize NOD factor fatty acyl chain. Involved in the synthesis of a highly unsaturated fatty acid moiety, which forms part of a lipo-oligosaccharide that is responsible for host specificity. The polypeptide is Nodulation protein E (nodE) (Rhizobium meliloti (Ensifer meliloti)).